The sequence spans 99 residues: Acylphosphatase (99 aa).

The Acylphosphatase-like domain occupies 5 to 97; it reads VRQVMIRGRV…RPGERFSQLP (93 aa). Residues Arg20 and Asn38 contribute to the active site.

It belongs to the acylphosphatase family.

It carries out the reaction an acyl phosphate + H2O = a carboxylate + phosphate + H(+). The protein is Acylphosphatase (acyP) of Nitrobacter winogradskyi (strain ATCC 25391 / DSM 10237 / CIP 104748 / NCIMB 11846 / Nb-255).